Consider the following 399-residue polypeptide: Large envelope protein (399 aa).

N-acetylmethionine is present on Met-1. Gly-2 carries N-myristoyl glycine; by host lipidation. Residues 2–118 (GLSWTVPLEW…PPLRDSHPQA (117 aa)) are pre-S1. The segment at 2–173 (GLSWTVPLEW…FSRIGDPAPN (172 aa)) is pre-S. Topologically, residues 2–180 (GLSWTVPLEW…APNMENITSG (179 aa)) are virion surface; in external conformation. The Intravirion; in internal conformation portion of the chain corresponds to 2-252 (GLSWTVPLEW…PGYRWMCLRR (251 aa)). Ser-4 carries N-linked (GlcNAc...) asparagine glycosylation. The segment at 69 to 117 (PHGGLLGWSPQSQGTLTTLPADPPPASTNRQSGRQPTPISPPLRDSHPQ) is disordered. Positions 119–173 (MQWNSTAFHQALQNPKVRGLYFPAGGSSSGIVNPVPTIASHISSIFSRIGDPAPN) are pre-S2. The helical transmembrane segment at 181–201 (FLGPLLVLQAGFFLLTRILTI) threads the bilayer. Residues 202–252 (PQSLDSWWTSLNFLGGVPVCPGLNSQSPTSNHSPISCPPTCPGYRWMCLRR) lie on the Intravirion; in external conformation side of the membrane. The helical transmembrane segment at 253–273 (FIIFLFILLLCLIFLLVLLDY) threads the bilayer. Over 274-347 (QGMLPVCPLI…WASVRFSWLS (74 aa)) the chain is Virion surface. The N-linked (GlcNAc...) asparagine; by host glycan is linked to Asn-319. Residues 348 to 368 (LLVPFVQWFVGLSPTVWLSAI) traverse the membrane as a helical segment. At 369 to 374 (WMMWYW) the chain is on the intravirion side. Residues 375-397 (GPNLYNILSPFIPLLPIFFCLWV) traverse the membrane as a helical segment. Residues 398-399 (YI) lie on the Virion surface side of the membrane.

It belongs to the orthohepadnavirus major surface antigen family. In terms of assembly, in its internal form (Li-HBsAg), interacts with the capsid protein and with the isoform S. Interacts with host chaperone CANX. As to quaternary structure, associates with host chaperone CANX through its pre-S2 N glycan; this association may be essential for isoform M proper secretion. Interacts with isoform L. Interacts with the antigens of satellite virus HDV (HDVAgs); this interaction is required for encapsidation of HDV genomic RNA. Post-translationally, isoform M is N-terminally acetylated by host at a ratio of 90%, and N-glycosylated by host at the pre-S2 region. In terms of processing, myristoylated.

Its subcellular location is the virion membrane. In terms of biological role, the large envelope protein exists in two topological conformations, one which is termed 'external' or Le-HBsAg and the other 'internal' or Li-HBsAg. In its external conformation the protein attaches the virus to cell receptors and thereby initiating infection. This interaction determines the species specificity and liver tropism. This attachment induces virion internalization predominantly through caveolin-mediated endocytosis. The large envelope protein also assures fusion between virion membrane and endosomal membrane. In its internal conformation the protein plays a role in virion morphogenesis and mediates the contact with the nucleocapsid like a matrix protein. Functionally, the middle envelope protein plays an important role in the budding of the virion. It is involved in the induction of budding in a nucleocapsid independent way. In this process the majority of envelope proteins bud to form subviral lipoprotein particles of 22 nm of diameter that do not contain a nucleocapsid. This Hepatitis B virus genotype G (isolate IG29227/2000) (HBV-G) protein is Large envelope protein.